The primary structure comprises 166 residues: Transcription antitermination protein NusB (166 aa).

It belongs to the NusB family.

Functionally, involved in transcription antitermination. Required for transcription of ribosomal RNA (rRNA) genes. Binds specifically to the boxA antiterminator sequence of the ribosomal RNA (rrn) operons. The protein is Transcription antitermination protein NusB of Chromohalobacter salexigens (strain ATCC BAA-138 / DSM 3043 / CIP 106854 / NCIMB 13768 / 1H11).